A 519-amino-acid polypeptide reads, in one-letter code: Sterile alpha motif domain-containing protein 1 (519 aa).

The span at 1–11 (MAGPPALPPPE) shows a compositional bias: pro residues. Disordered stretches follow at residues 1–30 (MAGP…ASPH) and 87–232 (YKGS…PVSL). Over residues 12–29 (TAAAATTAAAASSSAASP) the composition is skewed to low complexity. An SAMD1-like winged helix (WH) domain is found at 23-99 (SSSAASPHYQ…SISYRNAARV (77 aa)). Threonine 107 carries the post-translational modification Phosphothreonine. Residues 108–133 (PPAPPRVPRGGPAAPPPTPAPPPAPV) are compositionally biased toward pro residues. Over residues 134–147 (AAPTRAPRAAAATA) the composition is skewed to low complexity. At serine 150 the chain carries Phosphoserine. Over residues 157-166 (GPRAQRAAPL) the composition is skewed to low complexity. Pro residues predominate over residues 167-217 (AAPPPAPAAPPAAAPPAGPRRAPPPAVAAREPPAPPQQQQPPPPQPQPPPE). The segment covering 218–230 (GGAARAGGPARPV) has biased composition (low complexity). Position 242 is a phosphoserine (serine 242). Residues 261–271 (EAARGRLERTR) are compositionally biased toward basic and acidic residues. 2 disordered regions span residues 261–381 (EAAR…PGSC) and 417–439 (PALP…KPTD). The segment covering 308-325 (KEEEDEDEDEEEEEEDNV) has biased composition (acidic residues). One can recognise an SAM domain in the interval 443–511 (WTVMDVVEYF…KVLQQGHFED (69 aa)).

As to quaternary structure, homopolymerize into a closed pentameric ring. Interacts (via SAM domain) with L3MBTL3 (via SAM domain); the interaction mediates L3MBTL3 binding to chromatin. Interacts (via WH domain) with KDM1A; the interaction modulates KDM1A function. In terms of tissue distribution, expressed to similar levels in different organs. Expressed at higher levels in bone marrow, osteoclasts and spleen. Expressed in vascular smooth muscle cells.

It localises to the nucleus. The protein resides in the chromosome. Its subcellular location is the secreted. Its function is as follows. Unmethylated CpG islands (CGIs)-binding protein which localizes to H3K4me3-decorated CGIs, where it acts as a transcriptional repressor. Tethers L3MBTL3 to chromatin and interacts with the KDM1A histone demethylase complex to modulate H3K4me2 and H3K4me3 levels at CGIs. Plays a role in atherogenesis by binding with LDL on cell surface and promoting LDL oxidation which leads to the formation of foam cell. The polypeptide is Sterile alpha motif domain-containing protein 1 (Mus musculus (Mouse)).